The sequence spans 196 residues: Guanylate kinase (196 aa).

Residues 7–191 enclose the Guanylate kinase-like domain; that stretch reads RNIVLLVGPS…AAEEIEKIIL (185 aa). An ATP-binding site is contributed by 14–21; sequence GPSGVGKG.

This sequence belongs to the guanylate kinase family.

It is found in the cytoplasm. The enzyme catalyses GMP + ATP = GDP + ADP. Its function is as follows. Essential for recycling GMP and indirectly, cGMP. The chain is Guanylate kinase from Mycoplasmopsis pulmonis (strain UAB CTIP) (Mycoplasma pulmonis).